We begin with the raw amino-acid sequence, 358 residues long: MKPIHTIHRRESKQIFVGNVAIGGDAPISVQSMTNTKTTDVKATLKQISEIEEAGADLVRVSIPTMEAARAFKVIKEQVTIPLIADIHFDYKIALEVAKYGADCLRINPGNIGRVDYISEVVASAKDHDIPIRIGVNAGSLEKYLQKKYTRPTPEAMVESALRHIDILDKLNFDNFKISLKASEIFMTVFAYQQLSSQIDNPLHLGITEAGSLSFGTVKSSIGLGLLLSKGIGDTIRVSLASDPVDEVRVAFNILKSLNLRQKGVNLIACPSCSRQKFDVIKVVSELESRFKDIITPIDVSVIGCVVNGPGEAKSVSVGLTGGDPNLLYLDGKTHSKIINENLVNELEAQVRNSLKNL.

[4Fe-4S] cluster is bound by residues Cys270, Cys273, Cys305, and Glu312.

This sequence belongs to the IspG family. [4Fe-4S] cluster serves as cofactor.

It catalyses the reaction (2E)-4-hydroxy-3-methylbut-2-enyl diphosphate + oxidized [flavodoxin] + H2O + 2 H(+) = 2-C-methyl-D-erythritol 2,4-cyclic diphosphate + reduced [flavodoxin]. It participates in isoprenoid biosynthesis; isopentenyl diphosphate biosynthesis via DXP pathway; isopentenyl diphosphate from 1-deoxy-D-xylulose 5-phosphate: step 5/6. Its function is as follows. Converts 2C-methyl-D-erythritol 2,4-cyclodiphosphate (ME-2,4cPP) into 1-hydroxy-2-methyl-2-(E)-butenyl 4-diphosphate. The sequence is that of 4-hydroxy-3-methylbut-2-en-1-yl diphosphate synthase (flavodoxin) from Vesicomyosocius okutanii subsp. Calyptogena okutanii (strain HA).